Consider the following 1283-residue polypeptide: Peroxisomal ATPase PEX1 (1283 aa).

A disordered region spans residues 346–367; that stretch reads SKTKQNVLSPEKEKQMSEPLDQ. Serine 354 carries the phosphoserine modification. A compositionally biased stretch (basic and acidic residues) spans 355 to 367; it reads PEKEKQMSEPLDQ. ATP is bound by residues 599-606 and 881-888; these read GGKGSGKS and GPPGTGKT. Phosphoserine occurs at positions 1181, 1209, and 1211. Residues 1260–1283 are disordered; the sequence is FQNPKRRKNQSGTMFRPGQKVTLA.

This sequence belongs to the AAA ATPase family. As to quaternary structure, homooligomer; homooligomerizes in the cytosol, interaction with PEX6 promotes dissociation of the homooligomer. Interacts with PEX6; forming the PEX1-PEX6 AAA ATPase complex, which is composed of a heterohexamer formed by a trimer of PEX1-PEX6 dimers. Interacts indirectly with PEX26, via its interaction with PEX6.

It localises to the cytoplasm. The protein localises to the cytosol. Its subcellular location is the peroxisome membrane. The enzyme catalyses ATP + H2O = ADP + phosphate + H(+). In terms of biological role, component of the PEX1-PEX6 AAA ATPase complex, a protein dislocase complex that mediates the ATP-dependent extraction of the PEX5 receptor from peroxisomal membranes, an essential step for PEX5 recycling. Specifically recognizes PEX5 monoubiquitinated at 'Cys-11', and pulls it out of the peroxisome lumen through the PEX2-PEX10-PEX12 retrotranslocation channel. Extraction by the PEX1-PEX6 AAA ATPase complex is accompanied by unfolding of the TPR repeats and release of bound cargo from PEX5. The polypeptide is Peroxisomal ATPase PEX1 (Homo sapiens (Human)).